Consider the following 358-residue polypeptide: Uroporphyrinogen decarboxylase (358 aa).

Residues 36 to 40 (RQAGR), Asp-85, Tyr-160, Ser-215, and His-338 contribute to the substrate site.

Belongs to the uroporphyrinogen decarboxylase family. As to quaternary structure, homodimer.

The protein resides in the cytoplasm. The catalysed reaction is uroporphyrinogen III + 4 H(+) = coproporphyrinogen III + 4 CO2. The protein operates within porphyrin-containing compound metabolism; protoporphyrin-IX biosynthesis; coproporphyrinogen-III from 5-aminolevulinate: step 4/4. Its function is as follows. Catalyzes the decarboxylation of four acetate groups of uroporphyrinogen-III to yield coproporphyrinogen-III. This Corynebacterium glutamicum (strain ATCC 13032 / DSM 20300 / JCM 1318 / BCRC 11384 / CCUG 27702 / LMG 3730 / NBRC 12168 / NCIMB 10025 / NRRL B-2784 / 534) protein is Uroporphyrinogen decarboxylase.